Here is a 240-residue protein sequence, read N- to C-terminus: uncharacterized protein (240 aa).

Its subcellular location is the mitochondrion. This is an uncharacterized protein from Arabidopsis thaliana (Mouse-ear cress).